Reading from the N-terminus, the 263-residue chain is Bradykinin-potentiating and C-type natriuretic peptides (263 aa).

A signal peptide spans 1 to 23; that stretch reads MFVSRLAASGLLLLALMALSLDG. A propeptide spanning residues 24 to 30 is cleaved from the precursor; sequence KPVQQWS. Gln-31 is modified (pyrrolidone carboxylic acid). The propeptide occupies 42 to 48; the sequence is LVVQQWS. Gln-49 carries the post-translational modification Pyrrolidone carboxylic acid. Positions 60–66 are excised as a propeptide; that stretch reads LVVQQWS. Gln-67 carries the pyrrolidone carboxylic acid modification. Residues 78-84 constitute a propeptide that is removed on maturation; the sequence is LVVQQWS. Pyrrolidone carboxylic acid is present on Gln-85. Positions 89–95 are angiotensin-converting enzyme active site binding; sequence PRPKIPP. The propeptide occupies 96–102; it reads LVVQQWS. Position 103 is a pyrrolidone carboxylic acid (Gln-103). The interval 107–113 is angiotensin-converting enzyme active site binding; it reads PRPKIPP. Positions 114-116 are excised as a propeptide; it reads LVV. At Gln-117 the chain carries Pyrrolidone carboxylic acid. Residues 128-130 constitute a propeptide that is removed on maturation; it reads LLL. Gln-131 is modified (pyrrolidone carboxylic acid). Positions 137–241 are excised as a propeptide; it reads AGGTTALREE…ARRLKGLVKK (105 aa). 2 disordered regions span residues 152–171 and 177–205; these read EAAS…GSKA and RLSK…GKQA. Low complexity predominate over residues 181-192; it reads SKGASATSASAS. Positions 194–204 are enriched in basic and acidic residues; sequence PMRDLRTDGKQ. Cysteines 247 and 263 form a disulfide.

The protein in the N-terminal section; belongs to the bradykinin-potentiating peptide family. This sequence in the C-terminal section; belongs to the natriuretic peptide family. In terms of tissue distribution, expressed by the venom gland.

It is found in the secreted. Inhibits the rabbit lung angiotensin-converting enzyme (ACE) (IC(50)=15 uM). Contracts the rat gastric fundus smooth muscle in a rapid and transient manner. Functionally, causes no contraction of the rat gastric fundus smooth muscle even at high concentrations. Causes very weak contraction of the isolated guinea pig ileum. Causes weak contraction on rat uterus. In terms of biological role, inhibits the activity of the angiotensin-converting enzyme (ACE) by a preferential interaction with its C-domain (Ki=30 nM, IC(50)=1.1 uM). It binds ACE in a zinc-independent manner. Also potentiates the hypotensive effects of bradykinin. Causes high contraction of the isolated guinea pig ileum and weak contraction on rat uterus. Its function is as follows. Inhibits the activity of the angiotensin-converting enzyme (ACE) by interacting with the same potency to its C- and N-domains. Inhibits the rabbit lung angiotensin-converting enzyme (ACE) (IC(50)=7.1 uM). Causes weak contraction of the isolated guinea pig ileum. Causes weak contraction on rat uterus. Inhibits the rabbit lung angiotensin-converting enzyme (ACE) (IC(50)=46 uM). Synthetic Leu3-blomhotin contracts the rat gastric fundus smooth muscle in a rapid and transient manner. Causes moderate contraction of the isolated guinea pig ileum. Causes weak contraction on rat uterus. Functionally, causes weak contraction of the isolated guinea pig ileum. Causes about 50-fold more potentiating activity on rat uterus than on guinea pig ileum. In terms of biological role, synthetic peptide potentiates the bradykinin in vivo. Its function is as follows. Synthetic peptide does not show any bradykinin-potentiating effects. Has a vasorelaxant activity in rat aortic strips and a diuretic potency in anesthetized rats. May act by activating natriuretic receptors (NPR1 and/or NPR2). This chain is Bradykinin-potentiating and C-type natriuretic peptides, found in Gloydius blomhoffii (Mamushi).